The sequence spans 780 residues: Zinc finger and SCAN domain-containing protein 10 (780 aa).

A disordered region spans residues 1 to 38 (MLGESVPAAVEQEQLGEVKLEEEEAVSPEDPRRPESRL). Positions 29-38 (EDPRRPESRL) are enriched in basic and acidic residues. The 71-residue stretch at 56–126 (MGPRASLSRL…LLLEGIHREP (71 aa)) folds into the SCAN box domain. Disordered regions lie at residues 153–237 (GCAS…SRDQ) and 255–324 (KAWP…GSLL). Phosphoserine is present on residues serine 162 and serine 208. Polar residues predominate over residues 202 to 224 (SSKQPLSPGPQKTFQALQESSPQ). Position 268 is a phosphothreonine (threonine 268). A compositionally biased stretch (basic and acidic residues) spans 268 to 280 (TPDKEEFKQEEPK). 14 C2H2-type zinc fingers span residues 347 to 370 (FICA…LRSH), 376 to 398 (FLCL…MRTH), 404 to 426 (HACH…LLTH), 432 to 454 (FLCA…LLAH), 476 to 498 (VLCS…LRIH), 522 to 544 (FVCS…RRVH), 550 to 572 (FSCQ…QRVH), 578 to 600 (YACP…LLTH), 606 to 628 (HHCT…QRSH), 634 to 656 (CRCS…QRIH), 662 to 684 (HACD…RRSH), 690 to 712 (YSCQ…LATH), 724 to 746 (QECV…LLVH), and 752 to 774 (YSCT…LRTH). N5-methylglutamine is present on glutamine 483. Positions 492-520 (KRHLRIHARDKDRRSSEGSGSRRRDSDRR) are disordered. The segment covering 498–520 (HARDKDRRSSEGSGSRRRDSDRR) has biased composition (basic and acidic residues).

As to quaternary structure, interacts with POU5F1/OCT4 and SOX2. Post-translationally, methylated at Gln-483 by N6AMT1.

The protein localises to the nucleus. Embryonic stem (ES) cell-specific transcription factor required to maintain ES cell pluripotency. Can both activate and /or repress expression of target genes, depending on the context. Specifically binds the 5'-[GA]CGCNNGCG[CT]-3' DNA consensus sequence. Regulates expression of POU5F1/OCT4, ZSCAN4 and ALYREF/THOC4. The sequence is that of Zinc finger and SCAN domain-containing protein 10 (ZSCAN10) from Homo sapiens (Human).